The primary structure comprises 356 residues: S-adenosylmethionine:tRNA ribosyltransferase-isomerase (356 aa).

The protein belongs to the QueA family. Monomer.

Its subcellular location is the cytoplasm. The catalysed reaction is 7-aminomethyl-7-carbaguanosine(34) in tRNA + S-adenosyl-L-methionine = epoxyqueuosine(34) in tRNA + adenine + L-methionine + 2 H(+). It functions in the pathway tRNA modification; tRNA-queuosine biosynthesis. Transfers and isomerizes the ribose moiety from AdoMet to the 7-aminomethyl group of 7-deazaguanine (preQ1-tRNA) to give epoxyqueuosine (oQ-tRNA). This is S-adenosylmethionine:tRNA ribosyltransferase-isomerase from Escherichia coli (strain UTI89 / UPEC).